A 283-amino-acid polypeptide reads, in one-letter code: Zinc import ATP-binding protein ZnuC (283 aa).

One can recognise an ABC transporter domain in the interval V13–R228. Position 45–52 (G45–S52) interacts with ATP. The segment at H264–G283 is disordered. Residues G272–G283 show a composition bias toward gly residues.

The protein belongs to the ABC transporter superfamily. Zinc importer (TC 3.A.1.15.5) family. In terms of assembly, the complex is composed of two ATP-binding proteins (ZnuC), two transmembrane proteins (ZnuB) and a solute-binding protein (ZnuA).

It localises to the cell inner membrane. The catalysed reaction is Zn(2+)(out) + ATP(in) + H2O(in) = Zn(2+)(in) + ADP(in) + phosphate(in) + H(+)(in). Functionally, part of the ABC transporter complex ZnuABC involved in zinc import. Responsible for energy coupling to the transport system. In Chelativorans sp. (strain BNC1), this protein is Zinc import ATP-binding protein ZnuC.